Consider the following 510-residue polypeptide: Coatomer subunit delta (510 aa).

The MHD domain occupies 270 to 510; sequence MESVHMKIEE…TFLVDKYEIL (241 aa).

The protein belongs to the adaptor complexes medium subunit family. Delta-COP subfamily. As to quaternary structure, oligomeric complex that consists of at least the alpha, beta, beta', gamma, delta, epsilon and zeta subunits.

It localises to the cytoplasm. The protein localises to the golgi apparatus membrane. It is found in the cytoplasmic vesicle. Its subcellular location is the COPI-coated vesicle membrane. Functionally, the coatomer is a cytosolic protein complex that binds to dilysine motifs and reversibly associates with Golgi non-clathrin-coated vesicles, which further mediate biosynthetic protein transport from the ER, via the Golgi up to the trans Golgi network. Coatomer complex is required for budding from Golgi membranes, and is essential for the retrograde Golgi-to-ER transport of dilysine-tagged proteins. In mammals, the coatomer can only be recruited by membranes associated to ADP-ribosylation factors (ARFs), which are small GTP-binding proteins; the complex also influences the Golgi structural integrity, as well as the processing, activity, and endocytic recycling of LDL receptors. This Gallus gallus (Chicken) protein is Coatomer subunit delta (ARCN1).